We begin with the raw amino-acid sequence, 439 residues long: Microfibrillar-associated protein 1 (439 aa).

Polar residues predominate over residues 1 to 17 (MSVPSSLMKQPPIQSTA). The disordered stretch occupies residues 1-200 (MSVPSSLMKQ…SEDEMEPRLK (200 aa)). An N-acetylserine modification is found at Ser2. Positions 23-34 (RNEKGEISMEKV) are enriched in basic and acidic residues. Ser52 and Ser53 each carry phosphoserine. The span at 61-70 (QFIKKAKEQE) shows a compositional bias: basic and acidic residues. A Glycyl lysine isopeptide (Lys-Gly) (interchain with G-Cter in SUMO2) cross-link involves residue Lys67. The span at 71-81 (AEPEEQEEDSS) shows a compositional bias: acidic residues. 5 positions are modified to phosphoserine: Ser94, Ser116, Ser118, Ser132, and Ser133. 2 stretches are compositionally biased toward acidic residues: residues 112–122 (VVGESDSEVEG) and 131–144 (DSSE…DEEE). Positions 145-163 (IERRRGMMRQRAQERKNEE) are enriched in basic and acidic residues. Residues 178–195 (ESESESEYEEYTDSEDEM) show a composition bias toward acidic residues. A Glycyl lysine isopeptide (Lys-Gly) (interchain with G-Cter in SUMO2) cross-link involves residue Lys249. A Phosphothreonine modification is found at Thr267. Residue Lys357 forms a Glycyl lysine isopeptide (Lys-Gly) (interchain with G-Cter in SUMO2) linkage. Ser361 carries the post-translational modification Phosphoserine. Residues Lys371, Lys381, Lys415, and Lys418 each participate in a glycyl lysine isopeptide (Lys-Gly) (interchain with G-Cter in SUMO2) cross-link. A Phosphoserine modification is found at Ser432.

It belongs to the MFAP1 family. Component of the spliceosome B complex. Interacts with PRPF38A (via N-terminal interaction domain).

It localises to the nucleus. Involved in pre-mRNA splicing as a component of the spliceosome. This chain is Microfibrillar-associated protein 1, found in Bos taurus (Bovine).